A 422-amino-acid chain; its full sequence is UPF0229 protein Spro_2732 (422 aa).

Basic and acidic residues predominate over residues 77-90 (PGNDHFVQNDRVER). The tract at residues 77 to 109 (PGNDHFVQNDRVERPQGGGGGGSGQGNASQDGE) is disordered. The segment covering 92–101 (QGGGGGGSGQ) has biased composition (gly residues).

Belongs to the UPF0229 family.

The protein is UPF0229 protein Spro_2732 of Serratia proteamaculans (strain 568).